The chain runs to 492 residues: Ketol-acid reductoisomerase (NADP(+)) (492 aa).

Residues 15 to 208 (AQLGKCRFMA…GGHRAGVLES (194 aa)) form the KARI N-terminal Rossmann domain. NADP(+) contacts are provided by residues 45 to 48 (CGAQ), Arg-68, Arg-76, Ser-78, and 108 to 110 (DKQ). The active site involves His-132. Gly-158 serves as a coordination point for NADP(+). KARI C-terminal knotted domains follow at residues 209-344 (SFVA…NAPQ) and 345-485 (FEGK…MTDM). Asp-217, Glu-221, Glu-389, and Glu-393 together coordinate Mg(2+). Ser-414 serves as a coordination point for substrate.

It belongs to the ketol-acid reductoisomerase family. Mg(2+) serves as cofactor.

The enzyme catalyses (2R)-2,3-dihydroxy-3-methylbutanoate + NADP(+) = (2S)-2-acetolactate + NADPH + H(+). The catalysed reaction is (2R,3R)-2,3-dihydroxy-3-methylpentanoate + NADP(+) = (S)-2-ethyl-2-hydroxy-3-oxobutanoate + NADPH + H(+). It functions in the pathway amino-acid biosynthesis; L-isoleucine biosynthesis; L-isoleucine from 2-oxobutanoate: step 2/4. The protein operates within amino-acid biosynthesis; L-valine biosynthesis; L-valine from pyruvate: step 2/4. In terms of biological role, involved in the biosynthesis of branched-chain amino acids (BCAA). Catalyzes an alkyl-migration followed by a ketol-acid reduction of (S)-2-acetolactate (S2AL) to yield (R)-2,3-dihydroxy-isovalerate. In the isomerase reaction, S2AL is rearranged via a Mg-dependent methyl migration to produce 3-hydroxy-3-methyl-2-ketobutyrate (HMKB). In the reductase reaction, this 2-ketoacid undergoes a metal-dependent reduction by NADPH to yield (R)-2,3-dihydroxy-isovalerate. In Yersinia pseudotuberculosis serotype O:3 (strain YPIII), this protein is Ketol-acid reductoisomerase (NADP(+)).